The sequence spans 279 residues: Oxygen-dependent coproporphyrinogen-III oxidase (279 aa).

A substrate-binding site is contributed by Ser-102. A divalent metal cation is bound by residues His-106 and His-116. His-116 serves as the catalytic Proton donor. Residue 118–120 participates in substrate binding; that stretch reads NTR. A divalent metal cation is bound by residues His-149 and His-179. An important for dimerization region spans residues 244–279; it reads YVEFNLLYDRGTKFGLMTDGNVEAILMSLPPVVKFN.

This sequence belongs to the aerobic coproporphyrinogen-III oxidase family. As to quaternary structure, homodimer. Requires a divalent metal cation as cofactor.

Its subcellular location is the cytoplasm. It catalyses the reaction coproporphyrinogen III + O2 + 2 H(+) = protoporphyrinogen IX + 2 CO2 + 2 H2O. Its pathway is porphyrin-containing compound metabolism; protoporphyrin-IX biosynthesis; protoporphyrinogen-IX from coproporphyrinogen-III (O2 route): step 1/1. Involved in the heme biosynthesis. Catalyzes the aerobic oxidative decarboxylation of propionate groups of rings A and B of coproporphyrinogen-III to yield the vinyl groups in protoporphyrinogen-IX. This is Oxygen-dependent coproporphyrinogen-III oxidase from Rickettsia prowazekii (strain Madrid E).